A 210-amino-acid polypeptide reads, in one-letter code: Mitochondrial cardiolipin hydrolase (210 aa).

At 1–5 (MLLWG) the chain is on the mitochondrial intermembrane side. Residues 6 to 24 (RWKLAAGLAGLALSLELFY) form a helical membrane-spanning segment. At 25–210 (RYMRRRKPLR…YNFFPEKENK (186 aa)) the chain is on the cytoplasmic side. One can recognise a PLD phosphodiesterase domain in the interval 138-165 (SSGYMHHKFAVVDGTVVLTGSLNWTVQA). Residues H143, K145, and D150 contribute to the active site.

The protein belongs to the phospholipase D family. MitoPLD/Zucchini subfamily. In terms of assembly, homodimer.

The protein localises to the mitochondrion outer membrane. The catalysed reaction is a cardiolipin + H2O = a 1,2-diacyl-sn-glycero-3-phospho-(1'-sn-glycerol) + a 1,2-diacyl-sn-glycero-3-phosphate + H(+). Its function is as follows. Presents phospholipase and nuclease activities, depending on the different physiological conditions. Plays a key role in mitochondrial fusion and fission via its phospholipase activity. In its phospholipase role, it uses the mitochondrial lipid cardiolipin as substrate to generate phosphatidate (PA or 1,2-diacyl-sn-glycero-3-phosphate), a second messenger signaling lipid. Production of PA facilitates Mitofusin-mediated fusion, whereas the cleavage of PA by the Lipin family of phosphatases produces diacylgycerol (DAG) which promotes mitochondrial fission. Regulates mitochondrial shape through facilitating mitochondrial fusion. During spermatogenesis, plays a critical role in PIWI-interacting RNA (piRNA) biogenesis. piRNAs provide essential protection against the activity of mobile genetic elements. piRNA-mediated transposon silencing is thus critical for maintaining genome stability, in particular in germline cells when transposons are mobilized as a consequence of wide-spread genomic demethylation. Has been shown to be a backbone-non-specific, single strand-specific nuclease, cleaving either RNA or DNA substrates with similar affinity. Produces 5' phosphate and 3' hydroxyl termini, suggesting it could directly participate in the processing of primary piRNA transcripts. Has been proposed to act as a cardiolipin hydrolase to generate phosphatidic acid at mitochondrial surface. Although it cannot be excluded that it can act as a phospholipase in some circumstances, this activity could not be confirmed. This Xenopus laevis (African clawed frog) protein is Mitochondrial cardiolipin hydrolase (pld6).